The primary structure comprises 57 residues: Small ribosomal subunit protein bS21 (57 aa).

The disordered stretch occupies residues 35 to 57 (REFYEKPSVRRKKKSEAARKRKY). Over residues 43–57 (VRRKKKSEAARKRKY) the composition is skewed to basic residues.

The protein belongs to the bacterial ribosomal protein bS21 family.

The polypeptide is Small ribosomal subunit protein bS21 (Bacillus licheniformis (strain ATCC 14580 / DSM 13 / JCM 2505 / CCUG 7422 / NBRC 12200 / NCIMB 9375 / NCTC 10341 / NRRL NRS-1264 / Gibson 46)).